We begin with the raw amino-acid sequence, 62 residues long: Photosystem II reaction center protein Z (62 aa).

Transmembrane regions (helical) follow at residues 8-28 (AVFA…VVLA) and 41-61 (FSGA…NSFI).

The protein belongs to the PsbZ family. PSII is composed of 1 copy each of membrane proteins PsbA, PsbB, PsbC, PsbD, PsbE, PsbF, PsbH, PsbI, PsbJ, PsbK, PsbL, PsbM, PsbT, PsbY, PsbZ, Psb30/Ycf12, at least 3 peripheral proteins of the oxygen-evolving complex and a large number of cofactors. It forms dimeric complexes.

Its subcellular location is the plastid. It localises to the chloroplast thylakoid membrane. Functionally, may control the interaction of photosystem II (PSII) cores with the light-harvesting antenna, regulates electron flow through the 2 photosystem reaction centers. PSII is a light-driven water plastoquinone oxidoreductase, using light energy to abstract electrons from H(2)O, generating a proton gradient subsequently used for ATP formation. This is Photosystem II reaction center protein Z from Marchantia polymorpha (Common liverwort).